We begin with the raw amino-acid sequence, 941 residues long: Coiled-coil and C2 domain-containing protein 1A (941 aa).

A Phosphothreonine modification is found at threonine 91. Disordered regions lie at residues 183 to 248 (TINE…PCSP) and 301 to 336 (SRLP…VPQP). A compositionally biased stretch (polar residues) spans 228-239 (APSTTAQTSAKP). Serine 247 carries the post-translational modification Phosphoserine. Positions 303–318 (LPPPPDQLSPEPPLPA) are enriched in pro residues. Residues 338–384 (KNLLEALEQRMERYHVAAAQAKAKGDQRKARMHERIVKQYQDAIRAH) are a coiled coil. The segment at 428–482 (ANHEEGSDEEEEETPKKNTPAASTAQPKASPSRAPPSGPAPAGKAASKGTSTRAQ) is disordered. Serine 434 is modified (phosphoserine). The span at 467 to 476 (APAGKAASKG) shows a compositional bias: low complexity. Positions 475 to 508 (KGTSTRAQQQLAFLEGRKKQLLQAALRAKQKNDV) form a coiled coil. Residues 628 to 762 (RFEQRTFSVI…ETACEVHEIL (135 aa)) enclose the C2 domain.

It belongs to the CC2D1 family. Strongly expressed in several brain areas including frontal cortex, cortex, mesencephalon, hippocampus, midbrain and hypothalamus. Also expressed in testis and at low levels in pituitary, liver and kidney. In brain the highest levels are detected in hippocampal pyramidal cells and raphe nuclei.

It localises to the cytoplasm. It is found in the nucleus. The protein localises to the cytoskeleton. Its subcellular location is the microtubule organizing center. The protein resides in the centrosome. Its function is as follows. Transcription factor that binds specifically to the DRE (dual repressor element) and represses 5-HT1A gene transcription though this element. Mediates HDAC-independent repression of HTR1A promoter. CAMK2G inhibits CC2D1a-induced repression of the HTR1A. May play a role in the altered regulation of 5-HT1A receptors associated with anxiety and major depression. Performs essential function in controlling functional maturation of synapses. The sequence is that of Coiled-coil and C2 domain-containing protein 1A (Cc2d1a) from Rattus norvegicus (Rat).